We begin with the raw amino-acid sequence, 522 residues long: Cytochrome P450 1A1 (522 aa).

Phenylalanine 229 serves as a coordination point for substrate. Cysteine 463 contacts heme.

Belongs to the cytochrome P450 family. Requires heme as cofactor. In terms of tissue distribution, liver.

It localises to the endoplasmic reticulum membrane. The protein resides in the microsome membrane. The catalysed reaction is an organic molecule + reduced [NADPH--hemoprotein reductase] + O2 = an alcohol + oxidized [NADPH--hemoprotein reductase] + H2O + H(+). Its function is as follows. Cytochromes P450 are a group of heme-thiolate monooxygenases. They oxidize a variety of structurally unrelated compounds, including steroids, fatty acids, and xenobiotics. This chain is Cytochrome P450 1A1 (cyp1a1), found in Oncorhynchus mykiss (Rainbow trout).